The chain runs to 457 residues: Transcription factor PCF7 (457 aa).

Positions Ser-58–Gln-84 form a coiled coil. Positions Arg-95–Thr-119 are disordered. A compositionally biased stretch (gly residues) spans Gly-101 to Ser-115. The 59-residue stretch at Arg-140–Leu-198 folds into the TCP domain. Disordered regions lie at residues Pro-199 to Asn-231 and Lys-263 to Gln-299. Composition is skewed to low complexity over residues Ala-210–Thr-225 and Ser-268–Ala-278.

In terms of assembly, forms homodimers and heterodimers.

The protein localises to the nucleus. Its function is as follows. Transcription activator. Binds the promoter core sequence 5'-GGNCC-3'. This is Transcription factor PCF7 (PCF7) from Oryza sativa subsp. japonica (Rice).